Consider the following 205-residue polypeptide: CMRF35-like molecule 2 (205 aa).

The N-terminal stretch at 1–17 is a signal peptide; sequence MWLLPALLLLCLSGCLS. The 103-residue stretch at 18-120 folds into the Ig-like V-type domain; that stretch reads LKGPGSVTGT…VLDSWSRDPS (103 aa). Over 18–173 the chain is Extracellular; the sequence is LKGPGSVTGT…NSGFRLSSPH (156 aa). C36 and C104 form a disulfide bridge. A glycan (N-linked (GlcNAc...) asparagine) is linked at N154. A helical membrane pass occupies residues 174-194; sequence FLLVVLLKLPLLLSMLGAVFW. Residues 195-205 are Cytoplasmic-facing; sequence VNRPQWAPPGR.

The protein belongs to the CD300 family. As to quaternary structure, interacts with TYROBP. Post-translationally, N-glycosylated. Present on the surface of mature hematopoietic cells of the monocyte and myeloid lineages (at protein level).

It is found in the cell membrane. In terms of biological role, probably acts as an activating receptor. The polypeptide is CMRF35-like molecule 2 (CD300E) (Homo sapiens (Human)).